The following is a 360-amino-acid chain: MFVDSVEIIIASGKGGPGMVSFRREKFVIKGGPDGGDGGDGGDVYFEVDNNTDTLASFRGTKHHKAKNGAPGGTRNCAGKKGEDKIIVVPPGTQVFADDKLWLDLITPKERVLALKGGKGGLGNAHFKSATKQQPTYAQKGLEGVEKCVRLELKLIADIGLVGFPNAGKSTLISTISNAKPKIANYEFTTLVPNLGVVSVDEKSGFLMADIPGIIEGASEGKGLGISFLKHIERTKVLAFVLDASRLDLGIKEQYQRLRLELEKFSPALANKPFGVLLNKCDVVENIDEMAKDFCAFLNLEVQKLEAFDLEPYLGFLHPHLTSDFENDPNEKSALFVLPLSAVSALNTHALKFVLLKALP.

Positions 1–156 constitute an Obg domain; the sequence is MFVDSVEIII…KCVRLELKLI (156 aa). The region spanning 157 to 360 is the OBG-type G domain; it reads ADIGLVGFPN…LKFVLLKALP (204 aa). Residues 163-170, 188-192, 210-213, 279-282, and 341-343 contribute to the GTP site; these read GFPNAGKS, FTTLV, DIPG, NKCD, and SAV. Residues serine 170 and threonine 190 each coordinate Mg(2+).

The protein belongs to the TRAFAC class OBG-HflX-like GTPase superfamily. OBG GTPase family. As to quaternary structure, monomer. Mg(2+) serves as cofactor.

The protein resides in the cytoplasm. An essential GTPase which binds GTP, GDP and possibly (p)ppGpp with moderate affinity, with high nucleotide exchange rates and a fairly low GTP hydrolysis rate. Plays a role in control of the cell cycle, stress response, ribosome biogenesis and in those bacteria that undergo differentiation, in morphogenesis control. In Helicobacter pylori (strain G27), this protein is GTPase Obg.